The following is a 1372-amino-acid chain: DNA-directed RNA polymerase subunit beta (1372 aa).

It belongs to the RNA polymerase beta chain family. As to quaternary structure, the RNAP catalytic core consists of 2 alpha, 1 beta, 1 beta' and 1 omega subunit. When a sigma factor is associated with the core the holoenzyme is formed, which can initiate transcription.

The enzyme catalyses RNA(n) + a ribonucleoside 5'-triphosphate = RNA(n+1) + diphosphate. Functionally, DNA-dependent RNA polymerase catalyzes the transcription of DNA into RNA using the four ribonucleoside triphosphates as substrates. The sequence is that of DNA-directed RNA polymerase subunit beta from Nitratidesulfovibrio vulgaris (strain DSM 19637 / Miyazaki F) (Desulfovibrio vulgaris).